A 346-amino-acid polypeptide reads, in one-letter code: Coproporphyrin III ferrochelatase (346 aa).

Positions 52 and 121 each coordinate Fe-coproporphyrin III. Fe(2+)-binding residues include His-181 and Glu-264.

The protein belongs to the ferrochelatase family.

Its subcellular location is the cytoplasm. The catalysed reaction is Fe-coproporphyrin III + 2 H(+) = coproporphyrin III + Fe(2+). It participates in porphyrin-containing compound metabolism; protoheme biosynthesis. Its function is as follows. Involved in coproporphyrin-dependent heme b biosynthesis. Catalyzes the insertion of ferrous iron into coproporphyrin III to form Fe-coproporphyrin III. The polypeptide is Coproporphyrin III ferrochelatase (Mycobacterium sp. (strain KMS)).